The sequence spans 796 residues: Vacuolar protein sorting-associated protein 35 (796 aa).

S7 is subject to Phosphoserine. 2 interaction with SNX3 regions span residues 25 to 44 (VQSFQMKRCLDKNKLMDALK) and 205 to 215 (DREKRERERQE). The interval 438 to 796 (CYVLSNVLDY…EGPIYEGLIL (359 aa)) is interaction with SLC11A2. The tract at residues 500–693 (SEDPDQQYLI…DKNGEELHGG (194 aa)) is interaction with IGF2R cytoplasmic domain. At S783 the chain carries Phosphoserine. Y791 carries the post-translational modification Phosphotyrosine.

It belongs to the VPS35 family. As to quaternary structure, component of the heterotrimeric retromer cargo-selective complex (CSC), also decribed as vacuolar protein sorting subcomplex (VPS), formed by VPS26 (VPS26A or VPS26B), VPS29 and VPS35. The CSC has a highly elongated structure with VPS26 and VPS29 binding independently at opposite distal ends of VPS35 as central platform. The CSC is believed to associate with variable sorting nexins to form functionally distinct retromer complex variants. The originally described retromer complex (also called SNX-BAR retromer) is a pentamer containing the CSC and a heterodimeric membrane-deforming subcomplex formed between SNX1 or SNX2 and SNX5 or SNX6 (also called SNX-BAR subcomplex); the respective CSC and SNX-BAR subcomplexes associate with low affinity. The CSC associates with SNX3 to form a SNX3-retromer complex. The CSC associates with SNX27, the WASH complex and the SNX-BAR subcomplex to form the SNX27-retromer complex. Interacts with VPS26A, VPS26B, VPS29, SNX1, SNX2, IGF2R, SNX3, GOLPH3, LRRK2, SLC11A2, WASHC2A, WASHC2C, FKBP15, WASHC1, RAB7A, SNX27, WASHC5, EHD1. Interacts with MAGEL2; leading to recruitment of the TRIM27:MAGEL2 E3 ubiquitin ligase complex retromer-containing endosomes. Interacts with SORCS2. (Microbial infection) Interacts with human papillomavirus 16 minor capsid protein L2 (via C-terminus); this interaction mediates the transport of the capsid from the early endosome to the Golgi apparatus. Ubiquitous. Highly expressed in heart, brain, placenta, skeletal muscle, spleen, thymus, testis, ovary, small intestine, kidney and colon.

The protein localises to the cytoplasm. Its subcellular location is the membrane. It localises to the endosome. The protein resides in the early endosome. It is found in the late endosome. In terms of biological role, acts as a component of the retromer cargo-selective complex (CSC). The CSC is believed to be the core functional component of retromer or respective retromer complex variants acting to prevent missorting of selected transmembrane cargo proteins into the lysosomal degradation pathway. The recruitment of the CSC to the endosomal membrane involves RAB7A and SNX3. The CSC seems to associate with the cytoplasmic domain of cargo proteins predominantly via VPS35; however, these interactions seem to be of low affinity and retromer SNX proteins may also contribute to cargo selectivity thus questioning the classical function of the CSC. The SNX-BAR retromer mediates retrograde transport of cargo proteins from endosomes to the trans-Golgi network (TGN) and is involved in endosome-to-plasma membrane transport for cargo protein recycling. The SNX3-retromer mediates the retrograde endosome-to-TGN transport of WLS distinct from the SNX-BAR retromer pathway. The SNX27-retromer is believed to be involved in endosome-to-plasma membrane trafficking and recycling of a broad spectrum of cargo proteins. The CSC seems to act as recruitment hub for other proteins, such as the WASH complex and TBC1D5. Required for retrograde transport of lysosomal enzyme receptor IGF2R and SLC11A2. Required to regulate transcytosis of the polymeric immunoglobulin receptor (pIgR-pIgA). Required for endosomal localization of WASHC2C. Mediates the association of the CSC with the WASH complex via WASHC2. Required for the endosomal localization of TBC1D5. Its function is as follows. (Microbial infection) The heterotrimeric retromer cargo-selective complex (CSC) mediates the exit of human papillomavirus from the early endosome and the delivery to the Golgi apparatus. The chain is Vacuolar protein sorting-associated protein 35 from Homo sapiens (Human).